The sequence spans 314 residues: MKTLTLVAPAKINFYLEILGDRPDGFHELAMVMQSIALGDRLHLRQRQGQGFQLGCDRADLEVDERNLILKAAQRLQRSFPQIGGVDFFLEKRIPIGAGLAGGSTDGAAALVGLDIFSGLGLTQPELEAIAAELGSDMPFCVAGGTQLCTSRGEQLTPLPPLPSLSLVLAKFESLSVSTPWAYGRYREQFGDRYLQTEPARRDRLQALHAGPLLQAMSAGDPVAIAQHLRNDLEAVVLPEYPQVAELRSVLGNCSGILAAQMSGSGPSVFGIAENPTAAQAAVEQVRQAIADPDLKLWVTQTISHGIQTETLLR.

The active site involves Lys-11. An ATP-binding site is contributed by 95–105 (PIGAGLAGGST). Asp-137 is a catalytic residue.

Belongs to the GHMP kinase family. IspE subfamily.

The catalysed reaction is 4-CDP-2-C-methyl-D-erythritol + ATP = 4-CDP-2-C-methyl-D-erythritol 2-phosphate + ADP + H(+). Its pathway is isoprenoid biosynthesis; isopentenyl diphosphate biosynthesis via DXP pathway; isopentenyl diphosphate from 1-deoxy-D-xylulose 5-phosphate: step 3/6. In terms of biological role, catalyzes the phosphorylation of the position 2 hydroxy group of 4-diphosphocytidyl-2C-methyl-D-erythritol. In Synechococcus elongatus (strain ATCC 33912 / PCC 7942 / FACHB-805) (Anacystis nidulans R2), this protein is 4-diphosphocytidyl-2-C-methyl-D-erythritol kinase.